Here is a 557-residue protein sequence, read N- to C-terminus: TGF-beta receptor type-2 (557 aa).

Positions 1 to 23 (MPPRLRPLLLRVSLWVLVGSSSP) are cleaved as a signal peptide. At 24–155 (ALLHDRSKEN…KPEEKDEISK (132 aa)) the chain is on the extracellular side. Intrachain disulfides connect C41/C74, C44/C61, C51/C57, C67/C91, C111/C126, and C128/C133. N-linked (GlcNAc...) asparagine glycosylation is found at N62 and N84. The chain crosses the membrane as a helical span at residues 156 to 176 (VTIISLVPLLVISVAVIVIFY). The Cytoplasmic segment spans residues 177–557 (AYRTHKKRKL…PEDGSVTTAK (381 aa)). A Protein kinase domain is found at 234 to 537 (IELDIVVGKG…FSEFKHHDKL (304 aa)). Residues 240–248 (VGKGRFAEV) and K267 contribute to the ATP site. The active-site Proton acceptor is the D369.

The protein belongs to the protein kinase superfamily. TKL Ser/Thr protein kinase family. TGFB receptor subfamily. As to quaternary structure, heterohexamer; TGFB1, TGFB2 and TGFB3 homodimeric ligands assemble a functional receptor composed of two TGFBR1 and TGFBR2 heterodimers to form a ligand-receptor heterohexamer. The cofactor is Mg(2+). Mn(2+) is required as a cofactor. Post-translationally, phosphorylated on a Ser/Thr residue in the cytoplasmic domain. As to expression, detected at low levels in embryonic heart, brain and lung. Detected at high levels in hatchling heart and lung.

It is found in the cell membrane. It localises to the membrane raft. It catalyses the reaction L-threonyl-[receptor-protein] + ATP = O-phospho-L-threonyl-[receptor-protein] + ADP + H(+). The enzyme catalyses L-seryl-[receptor-protein] + ATP = O-phospho-L-seryl-[receptor-protein] + ADP + H(+). Its function is as follows. Transmembrane serine/threonine kinase forming with the TGF-beta type I serine/threonine kinase receptor, TGFBR1, the non-promiscuous receptor for the TGF-beta cytokines TGFB1, TGFB2 and TGFB3. Transduces the TGFB1, TGFB2 and TGFB3 signal from the cell surface to the cytoplasm and is thus regulating a plethora of physiological and pathological processes including cell cycle arrest in epithelial and hematopoietic cells, control of mesenchymal cell proliferation and differentiation, wound healing, extracellular matrix production, immunosuppression and carcinogenesis. The formation of the receptor complex composed of 2 TGFBR1 and 2 TGFBR2 molecules symmetrically bound to the cytokine dimer results in the phosphorylation and the activation of TGFRB1 by the constitutively active TGFBR2. Activated TGFBR1 phosphorylates SMAD2 which dissociates from the receptor and interacts with SMAD4. The SMAD2-SMAD4 complex is subsequently translocated to the nucleus where it modulates the transcription of the TGF-beta-regulated genes. This constitutes the canonical SMAD-dependent TGF-beta signaling cascade. Also involved in non-canonical, SMAD-independent TGF-beta signaling pathways. This Gallus gallus (Chicken) protein is TGF-beta receptor type-2 (TGFBR2).